The primary structure comprises 422 residues: Probable glycosidase CRR1 (422 aa).

An N-terminal signal peptide occupies residues 1–20; it reads MRISILQLVPVVGYIGFALG. The region spanning 67 to 339 is the GH16 domain; sequence DEESCAPIPA…WENSPDIIEK (273 aa). The active-site Nucleophile is the Glu217. Glu221 serves as the catalytic Proton donor.

It belongs to the glycosyl hydrolase 16 family. CRR1 subfamily.

It localises to the spore wall. Functionally, spore specific glycosidase involved in spore wall assembly during sporulation. May be involved in copper import. The chain is Probable glycosidase CRR1 (CRR1) from Saccharomyces cerevisiae (strain ATCC 204508 / S288c) (Baker's yeast).